The sequence spans 501 residues: NAD(P)H-quinone oxidoreductase chain 4, chloroplastic (501 aa).

14 helical membrane passes run 4–24 (FPWLTIIVVLPISAGSLILFL), 35–55 (YTICICILELLITTYAFCYHF), 84–104 (GLSIGPILLTGFITTLATLAA), 111–129 (SRLLHLLMLAMYSGQIGSF), 134–154 (LLLFFIMWELELIPVYLLLSM), 168–188 (FILYTAGGSIFLLMGVLGMDL), 209–229 (ALEILFYFGFIIAFAVKSPII), 243–263 (HYSTCMLLAGILLKMGAYGLI), 273–293 (AHSIFSPWLVIVGTMQIIYAA), 306–326 (IAYSSVSHMGFIIIGIGSITD), 331–351 (GAILQIISHGFIGAALFFLAG), 387–407 (LALPGMSGFVAELIVFFGIIT), 417–437 (ILITFVMAIGMILTPIYSLSM), and 463–483 (LFVSISIFLPVIGIGIYPDFV).

This sequence belongs to the complex I subunit 4 family.

The protein resides in the plastid. The protein localises to the chloroplast thylakoid membrane. The catalysed reaction is a plastoquinone + NADH + (n+1) H(+)(in) = a plastoquinol + NAD(+) + n H(+)(out). It carries out the reaction a plastoquinone + NADPH + (n+1) H(+)(in) = a plastoquinol + NADP(+) + n H(+)(out). This is NAD(P)H-quinone oxidoreductase chain 4, chloroplastic from Buxus microphylla (Littleleaf boxwood).